The following is a 546-amino-acid chain: MSDFILISDGEDEATPPPSKRARKNRTPTDLNLDTEPSLQKQPPGSASTPFFLDETPLSDDVTVLKSSFGSGTGASSGRENNFFGKRVISLESDSEDSPGPESSKKYEPVYTDSWKKPCRLEFGSSDANSDDDPSWMRRASFQSSLSKDAIEVDSDHEKEDTGVEKMGRKKQTITSKSTSLSADSLPKKKMSKDEKTRAAEEKKLQKEQEKLQKAASKAEDAEHKKLEREKQKWAKEKDKALKCIVAWIDNKVLEGSFGGLLISGLKEKCITYHVTTNPIQRSIVWTMTLPEDIAQSLPLGSKIPYVLLLYEAEDFCNLVAKKELLENVYRVRDEYPSYTMCYLTNKLLSYVNKKERVEYKDPVNGCGWRKPPIDEAIAKLSTHYIGVHSRHCVDEAEVADHVVRLTSSLAHCQVRKKLTRLSVYADGTLMSKNAADKHLIRESIWLKVLVAIPKVQPRYAIAVSKKYPSLKSLLKVYMDPNISVHEKEFLLKDLKVENLVGRDTSVGEACSKRIYRVLMSLDGTIKTDDVENGAASFTLPPSDLI.

Disordered stretches follow at residues Met-1–Glu-55 and Val-88–Gln-232. Polar residues predominate over residues Pro-28–Thr-49. 2 stretches are compositionally biased toward basic and acidic residues: residues Ser-103 to Arg-120 and Asp-149 to Met-167. Positions Thr-173 to Ala-183 are enriched in polar residues. A coiled-coil region spans residues Lys-188–Ile-245. Over residues Ser-192–Gln-232 the composition is skewed to basic and acidic residues. Positions Asn-278–Tyr-478 constitute an ERCC4 domain.

Belongs to the EME1/MMS4 family. In terms of assembly, forms a heterodimer with MUS81. Mg(2+) is required as a cofactor. Ca(2+) serves as cofactor.

It localises to the nucleus. Its function is as follows. Interacts with MUS81 to form a DNA structure-specific endonuclease with substrate preference for branched DNA structures with a 5'-end at the branch nick. Typical substrates include 3'-flap structures, D-loops, replication forks, nicked Holliday junctions and also intact Holliday junctions with a reduced efficiency. May be required in mitosis for the processing of stalled or collapsed replication fork intermediates. Plays a role in DNA repair and in genotoxic stress-induced homologous recombination (HR) in somatic cells. Mediates a subset of meiotic recombination events that are insensitive to crossover interference. In Arabidopsis thaliana (Mouse-ear cress), this protein is Crossover junction endonuclease EME1A (EME1A).